Reading from the N-terminus, the 683-residue chain is 1,4-alpha-glucan-branching enzyme (683 aa).

Positions 92 and 127 each coordinate (1,4-alpha-D-glucosyl)n. Asp342 (nucleophile) is an active-site residue. Glu397 acts as the Proton donor in catalysis.

The protein belongs to the glycosyl hydrolase 13 family. GlgB subfamily.

It is found in the cytoplasm. It catalyses the reaction Transfers a segment of a (1-&gt;4)-alpha-D-glucan chain to a primary hydroxy group in a similar glucan chain.. It participates in glycan biosynthesis; glycogen biosynthesis. Glycogen-branching enzyme participates in the glycogen biosynthetic process along with glycogenin and glycogen synthase. Generates alpha-1,6-glucosidic branches from alpha-1,4-linked glucose chains, to increase solubility of the glycogen polymer. This chain is 1,4-alpha-glucan-branching enzyme (GLC3), found in Rhizophagus irregularis (strain DAOM 181602 / DAOM 197198 / MUCL 43194) (Arbuscular mycorrhizal fungus).